A 248-amino-acid polypeptide reads, in one-letter code: tRNA pseudouridine synthase A (248 aa).

Asp-53 functions as the Nucleophile in the catalytic mechanism. Tyr-111 contacts substrate.

Belongs to the tRNA pseudouridine synthase TruA family. Homodimer.

The catalysed reaction is uridine(38/39/40) in tRNA = pseudouridine(38/39/40) in tRNA. Its function is as follows. Formation of pseudouridine at positions 38, 39 and 40 in the anticodon stem and loop of transfer RNAs. The polypeptide is tRNA pseudouridine synthase A (Listeria monocytogenes serotype 4a (strain HCC23)).